A 78-amino-acid chain; its full sequence is Small ribosomal subunit protein bS18c (78 aa).

The protein belongs to the bacterial ribosomal protein bS18 family. Part of the 30S ribosomal subunit.

It is found in the plastid. The protein resides in the chloroplast. This is Small ribosomal subunit protein bS18c from Oltmannsiellopsis viridis (Marine flagellate).